Reading from the N-terminus, the 187-residue chain is UPF0301 protein BCI_0481 (187 aa).

It belongs to the UPF0301 (AlgH) family.

In Baumannia cicadellinicola subsp. Homalodisca coagulata, this protein is UPF0301 protein BCI_0481.